Reading from the N-terminus, the 145-residue chain is Probable DNA-directed RNA polymerases I and III subunit RPAC2 (145 aa).

The disordered stretch occupies residues 1–52; it reads MGKKSEKKVVEETMEVDEQPAVEPEAVPEEEPEVEDEDLNVPKKKKMEILDP. The segment covering 12-39 has biased composition (acidic residues); it reads ETMEVDEQPAVEPEAVPEEEPEVEDEDL.

It belongs to the archaeal Rpo11/eukaryotic RPB11/RPC19 RNA polymerase subunit family. Component of the RNA polymerase I (Pol I) and RNA polymerase III (Pol III) complexes consisting of at least 13 and 17 subunits, respectively.

Its subcellular location is the nucleus. In terms of biological role, DNA-dependent RNA polymerase catalyzes the transcription of DNA into RNA using the four ribonucleoside triphosphates as substrates. Common core component of RNA polymerases I and III which synthesize ribosomal RNA precursors and small RNAs, such as 5S rRNA and tRNAs, respectively. The sequence is that of Probable DNA-directed RNA polymerases I and III subunit RPAC2 (rpac-19) from Caenorhabditis briggsae.